A 30-amino-acid polypeptide reads, in one-letter code: GLPVCGETCFGGTCNTPGCICDPWPVCTRN.

A cross-link (cyclopeptide (Gly-Asn)) is located at residues 1 to 30 (GLPVCGETCFGGTCNTPGCICDPWPVCTRN). Intrachain disulfides connect Cys-5–Cys-19, Cys-9–Cys-21, and Cys-14–Cys-27.

Post-translationally, this is a cyclic peptide.

Its function is as follows. Probably participates in a plant defense mechanism. The chain is Cycloviolacin-H3 from Viola hederacea (Australian violet).